Here is a 200-residue protein sequence, read N- to C-terminus: 3-isopropylmalate dehydratase small subunit (200 aa).

It belongs to the LeuD family. LeuD type 1 subfamily. In terms of assembly, heterodimer of LeuC and LeuD.

It catalyses the reaction (2R,3S)-3-isopropylmalate = (2S)-2-isopropylmalate. The protein operates within amino-acid biosynthesis; L-leucine biosynthesis; L-leucine from 3-methyl-2-oxobutanoate: step 2/4. In terms of biological role, catalyzes the isomerization between 2-isopropylmalate and 3-isopropylmalate, via the formation of 2-isopropylmaleate. In Vibrio vulnificus (strain CMCP6), this protein is 3-isopropylmalate dehydratase small subunit.